Here is a 270-residue protein sequence, read N- to C-terminus: Zinc finger protein ZAT2 (270 aa).

Composition is skewed to polar residues over residues 1 to 28 (MSNT…YNQN) and 36 to 48 (LTNN…SSSP). A disordered region spans residues 1–64 (MSNTSNSDPN…QPDPDASQIA (64 aa)). Residues 65–87 (RPCTECGKQFGSLKALFGHMRCH) form a C2H2-type 1 zinc finger. Residues 95–119 (INPPSNFKRRINSNAASSSSSWDPS) are disordered. Residues 106-115 (NSNAASSSSS) are compositionally biased toward low complexity. C2H2-type zinc fingers lie at residues 148-170 (FECD…RATH) and 211-233 (HRCN…MRCH).

In terms of assembly, interacts (via the EAR motif) with TPL. In terms of tissue distribution, expressed exclusively in pollen.

It is found in the nucleus. Mediates the regulation of male germ cell division by DUO1. This is Zinc finger protein ZAT2 from Arabidopsis thaliana (Mouse-ear cress).